The following is an 855-amino-acid chain: Cone cGMP-specific 3',5'-cyclic phosphodiesterase subunit alpha' (855 aa).

GAF domains follow at residues 70-219 (SVEL…SIIL) and 251-428 (DVER…GWSL). 3',5'-cyclic GMP-binding positions include Ser92, Ser116, 164-167 (DKQT), and Thr171. The PDEase domain occupies 481–814 (EEKQLVTILK…VEWKSLADEY (334 aa)). The Proton donor role is filled by His557. 4 residues coordinate a divalent metal cation: His561, His597, Asp598, and Asp718. The interval 823–855 (EMKKQEEGNTTEKAVEDSGGGGDDKKSKTCLML) is disordered. Cys852 is modified (cysteine methyl ester). Cys852 carries S-geranylgeranyl cysteine lipidation. A propeptide spans 853 to 855 (LML) (removed in mature form).

This sequence belongs to the cyclic nucleotide phosphodiesterase family. As to quaternary structure, composed of two alpha' subunits that are associated with 3 smaller proteins of 11, 13, and 15 kDa. The cofactor is a divalent metal cation.

It is found in the cell membrane. It carries out the reaction 3',5'-cyclic GMP + H2O = GMP + H(+). Functionally, as cone-specific cGMP phosphodiesterase, it plays an essential role in light detection and cone phototransduction by rapidly decreasing intracellular levels of cGMP. This Bos taurus (Bovine) protein is Cone cGMP-specific 3',5'-cyclic phosphodiesterase subunit alpha' (PDE6C).